A 586-amino-acid chain; its full sequence is Protein NRT1/ PTR FAMILY 5.3 (586 aa).

The next 11 membrane-spanning stretches (helical) occupy residues 77–97 (WVGT…AHFG), 100–120 (ITFV…TLSV), 141–161 (ASVI…IGTG), 189–209 (FFNW…TVLV), 217–237 (WAIG…IFLL), 334–354 (PVLF…TLFI), 370–390 (IPPA…IVIY), 408–428 (ITLL…MIIA), 449–469 (AVPI…MGLA), 492–512 (LGTS…SILL), and 538–558 (NYYM…LVVI).

It belongs to the major facilitator superfamily. Proton-dependent oligopeptide transporter (POT/PTR) (TC 2.A.17) family. In terms of tissue distribution, expressed in roots and siliques.

It is found in the membrane. In terms of biological role, peptide transporter. In Arabidopsis thaliana (Mouse-ear cress), this protein is Protein NRT1/ PTR FAMILY 5.3 (NPF5.3).